The chain runs to 166 residues: MTQEEYILIGKVLGVWGISGGLKIGVLTDFPERFDAGNELLVGRKLYTISQTNWQKAQVIVHLSGIDDIDTALELKDALVEIPASALKELPEGVYYDFQLIGLEVVDLSGVKIGQIKEILHMPSNDIYVSSYGVKEALIPAIKDVVKEINLKTGKIIIDPIPGLLD.

The region spanning E92–L164 is the PRC barrel domain.

Belongs to the RimM family. As to quaternary structure, binds ribosomal protein uS19.

The protein localises to the cytoplasm. In terms of biological role, an accessory protein needed during the final step in the assembly of 30S ribosomal subunit, possibly for assembly of the head region. Essential for efficient processing of 16S rRNA. May be needed both before and after RbfA during the maturation of 16S rRNA. It has affinity for free ribosomal 30S subunits but not for 70S ribosomes. In Dehalococcoides mccartyi (strain CBDB1), this protein is Ribosome maturation factor RimM.